A 163-amino-acid polypeptide reads, in one-letter code: NF-kappa-B inhibitor-interacting Ras-like protein 2 (163 aa).

The interval 1–163 (MGKSCKVVIC…SANWNLHPDH (163 aa)) is small GTPase-like. 11-18 (GQHGVGKT) lines the GTP pocket. The Effector region motif lies at 35-43 (MIETQEDIY). Residues 61-65 (DTRGL) and 120-123 (NKSD) each bind GTP.

It belongs to the small GTPase superfamily. Ras family. KappaB-Ras subfamily.

It localises to the cytoplasm. In terms of biological role, atypical Ras-like protein that acts as a potent regulator of NF-kappa-B activity by preventing the degradation of NF-kappa-B inhibitor beta (NFKBIB) by most signals, explaining why NFKBIB is more resistant to degradation. The sequence is that of NF-kappa-B inhibitor-interacting Ras-like protein 2 (nkiras2) from Xenopus laevis (African clawed frog).